We begin with the raw amino-acid sequence, 841 residues long: Envelope glycoprotein H (841 aa).

The signal sequence occupies residues Met-1–Ala-17. Residues Asn-18, Asn-45, and Asn-217 are each glycosylated (N-linked (GlcNAc...) asparagine; by host). The Virion surface portion of the chain corresponds to Asn-18 to Gly-802. The segment at Asp-246–Leu-309 is interaction with gL. Residues Asn-317, Asn-499, Asn-522, Asn-760, and Asn-783 are each glycosylated (N-linked (GlcNAc...) asparagine; by host). The chain crosses the membrane as a helical span at residues Gln-803–Gly-823. Residues Trp-824–Thr-841 are Intravirion-facing.

Belongs to the herpesviridae glycoprotein H family. In terms of assembly, interacts with glycoprotein L (gL); this interaction is necessary for the correct processing and cell surface expression of gH. The heterodimer gH/gL seems to interact with gB trimers during fusion. N-glycosylated, O-glycosylated, and sialylated.

The protein localises to the virion membrane. It is found in the host cell membrane. Its subcellular location is the host endosome membrane. In terms of biological role, the heterodimer glycoprotein H-glycoprotein L is required for the fusion of viral and plasma membranes leading to virus entry into the host cell. Following initial binding to host receptor, membrane fusion is mediated by the fusion machinery composed of gB and the heterodimer gH/gL. May also be involved in the fusion between the virion envelope and the outer nuclear membrane during virion morphogenesis. The chain is Envelope glycoprotein H from Varicella-zoster virus (strain Dumas) (HHV-3).